The following is a 338-amino-acid chain: Calcium uniporter protein 4, mitochondrial (338 aa).

A mitochondrion-targeting transit peptide spans 1-36 (MVMMKKLLSNRLFNMSKTASQSLMNCRTSSSSSLAM). A helical membrane pass occupies residues 233–253 (LWAGLGYLIIQTAGFMRLTFW). The Selectivity filter motif lies at 257 to 265 (WDVMEPICF). Glu261 lines the Ca(2+) pocket. The helical transmembrane segment at 263–280 (ICFYVSSVYFMAGYTFFL) threads the bilayer.

The protein belongs to the MCU (TC 1.A.77) family.

It is found in the mitochondrion inner membrane. The enzyme catalyses Ca(2+)(in) = Ca(2+)(out). In terms of biological role, mitochondrial inner membrane calcium uniporter that mediates calcium uptake into mitochondria. Constitutes a pore-forming and calcium-conducting subunit. Mitochondrial calcium homeostasis plays key roles in cellular physiology and regulates cell bioenergetics, cytoplasmic calcium signals and activation of cell death pathways. The chain is Calcium uniporter protein 4, mitochondrial from Arabidopsis thaliana (Mouse-ear cress).